The chain runs to 613 residues: Pescadillo homolog (613 aa).

A coiled-coil region spans residues 259–344; that stretch reads KELSNELETK…MKQIEHDIIX (86 aa). A disordered region spans residues 268 to 333; the sequence is KESTEDNIIE…KNDQKNDQKN (66 aa). Over residues 278–333 the composition is skewed to basic and acidic residues; sequence ENEKKTKNGKTENCEKNDQENEKKTKNDKTKNCEKNDQKNDQKNDQKNDQKNDQKN. One can recognise a BRCT domain in the interval 350–453; sequence SVKNLFKNHI…MILSCEDYNI (104 aa). A disordered region spans residues 485 to 517; it reads LSEDPQYNKSIQKNKTNSENKXNNYNDNENDMS. A coiled-coil region spans residues 492–601; sequence NKSIQKNKTN…ENRQKLTIEK (110 aa). Residues 497 to 511 are compositionally biased toward low complexity; sequence KNKTNSENKXNNYND.

Belongs to the pescadillo family.

The protein resides in the nucleus. The protein localises to the nucleolus. It is found in the nucleoplasm. Required for maturation of ribosomal RNAs and formation of the large ribosomal subunit. The sequence is that of Pescadillo homolog from Plasmodium yoelii yoelii.